The sequence spans 24 residues: Grammistin Pp 4b (24 aa).

In terms of assembly, exists as aggregates of 3-4 molecules. Expressed by the skin glands.

The protein localises to the secreted. Thanks to its abundant amphiphilic alpha-helices, it may integrate into membrane phospholipids, leading to lysis of the membrane. Its hemolytic activity is inhibited by phospholipids, but not by cholesterol. Has antibacterial activity with a broad spectrum against various species of bacteria including both Gram-positive and Gram-negative groups. Also has ichthyotoxic activity. The chain is Grammistin Pp 4b from Pogonoperca punctata (Clown grouper).